A 369-amino-acid polypeptide reads, in one-letter code: Peptidyl-prolyl cis-trans isomerase D (369 aa).

Positions 7–175 (YFDISCNGKP…EDWKIADCGE (169 aa)) constitute a PPIase cyclophilin-type domain. TPR repeat units follow at residues 217-250 (VSKI…LNDY), 268-301 (LSCY…EQID), and 306-339 (TKAL…EPND).

This sequence belongs to the cyclophilin-type PPIase family. PPIase D subfamily.

It is found in the cytoplasm. The catalysed reaction is [protein]-peptidylproline (omega=180) = [protein]-peptidylproline (omega=0). Its function is as follows. PPIases accelerate the folding of proteins. It catalyzes the cis-trans isomerization of proline imidic peptide bonds in oligopeptides. The polypeptide is Peptidyl-prolyl cis-trans isomerase D (CPR6) (Candida albicans (strain SC5314 / ATCC MYA-2876) (Yeast)).